A 197-amino-acid chain; its full sequence is Imidazoleglycerol-phosphate dehydratase (197 aa).

This sequence belongs to the imidazoleglycerol-phosphate dehydratase family.

The protein localises to the cytoplasm. It catalyses the reaction D-erythro-1-(imidazol-4-yl)glycerol 3-phosphate = 3-(imidazol-4-yl)-2-oxopropyl phosphate + H2O. It functions in the pathway amino-acid biosynthesis; L-histidine biosynthesis; L-histidine from 5-phospho-alpha-D-ribose 1-diphosphate: step 6/9. The chain is Imidazoleglycerol-phosphate dehydratase from Hahella chejuensis (strain KCTC 2396).